A 180-amino-acid chain; its full sequence is Cell division protein ZapC (180 aa).

This sequence belongs to the ZapC family. Interacts directly with FtsZ.

The protein localises to the cytoplasm. Contributes to the efficiency of the cell division process by stabilizing the polymeric form of the cell division protein FtsZ. Acts by promoting interactions between FtsZ protofilaments and suppressing the GTPase activity of FtsZ. The protein is Cell division protein ZapC of Vibrio cholerae serotype O1 (strain ATCC 39315 / El Tor Inaba N16961).